Here is a 328-residue protein sequence, read N- to C-terminus: Serine protease 27 (328 aa).

The N-terminal stretch at Met1–Gly22 is a signal peptide. The propeptide at Ala23–Arg37 is activation peptide. The Peptidase S1 domain maps to Met38–Pro280. Cys63 and Cys79 are disulfide-bonded. His78 serves as the catalytic Charge relay system. Asn82 carries an N-linked (GlcNAc...) asparagine glycan. The active-site Charge relay system is Asp127. Disulfide bonds link Cys161-Cys238, Cys194-Cys217, and Cys228-Cys256. The active-site Charge relay system is the Ser232.

Belongs to the peptidase S1 family.

The protein localises to the secreted. In Mus musculus (Mouse), this protein is Serine protease 27 (Prss27).